We begin with the raw amino-acid sequence, 485 residues long: Acyl transferase 1 (485 aa).

Residue His-172 is the Proton acceptor of the active site.

This sequence belongs to the plant acyltransferase family. In terms of tissue distribution, highly expressed in young panicles. Expressed in leaf sheaths and panicles.

Functionally, involved in defense against pathogens. May contribute to disease resistance by potentiating disease resistance signaling, or producing phytoalexin-like secondary products. The polypeptide is Acyl transferase 1 (Oryza sativa subsp. japonica (Rice)).